The primary structure comprises 122 residues: UPF0145 protein BceJ2315_57450 (122 aa).

The protein belongs to the UPF0145 family.

The protein is UPF0145 protein BceJ2315_57450 of Burkholderia cenocepacia (strain ATCC BAA-245 / DSM 16553 / LMG 16656 / NCTC 13227 / J2315 / CF5610) (Burkholderia cepacia (strain J2315)).